A 90-amino-acid chain; its full sequence is MSSKTRKSSRVILEHEYVPEHRLLSIEEAVQVLKMLGIKPWQLPKISVNDPIARLLKAKPGDIIEITRRSYTAGEAKYYRFVVAYQKGVK.

This sequence belongs to the archaeal Rpo5/eukaryotic RPB5 RNA polymerase subunit family. Part of the RNA polymerase complex.

It localises to the cytoplasm. The catalysed reaction is RNA(n) + a ribonucleoside 5'-triphosphate = RNA(n+1) + diphosphate. Functionally, DNA-dependent RNA polymerase (RNAP) catalyzes the transcription of DNA into RNA using the four ribonucleoside triphosphates as substrates. The chain is DNA-directed RNA polymerase subunit Rpo5 from Aeropyrum pernix (strain ATCC 700893 / DSM 11879 / JCM 9820 / NBRC 100138 / K1).